Here is a 323-residue protein sequence, read N- to C-terminus: Delta-aminolevulinic acid dehydratase (323 aa).

Residues Cys-118, Cys-120, and Cys-128 each coordinate Zn(2+). Lys-195 serves as the catalytic Schiff-base intermediate with substrate. 2 residues coordinate 5-aminolevulinate: Arg-205 and Arg-217. Glu-233 serves as a coordination point for Mg(2+). Lys-248 functions as the Schiff-base intermediate with substrate in the catalytic mechanism. The 5-aminolevulinate site is built by Ser-274 and Tyr-313.

This sequence belongs to the ALAD family. In terms of assembly, homooctamer. Zn(2+) serves as cofactor.

It carries out the reaction 2 5-aminolevulinate = porphobilinogen + 2 H2O + H(+). Its pathway is porphyrin-containing compound metabolism; protoporphyrin-IX biosynthesis; coproporphyrinogen-III from 5-aminolevulinate: step 1/4. Catalyzes an early step in the biosynthesis of tetrapyrroles. Binds two molecules of 5-aminolevulinate per subunit, each at a distinct site, and catalyzes their condensation to form porphobilinogen. This Staphylococcus aureus protein is Delta-aminolevulinic acid dehydratase (hemB).